A 2769-amino-acid chain; its full sequence is MALALWVFGLLDLICLASANIFEYQVDAQPLRPCELQRERAFLKREDYVPQCAEDGSFQTVQCGKDGASCWCVDADGREVPGSRQPGRPAACLSFCQLQKQQILLSSYINSTATSYLPQCQDSGDYSPVQCDLRRRQCWCVDAEGMEVYGTRQQGRPARCPRSCEIRNRRLLHGVGDRSPPQCSPDGAFRPVQCKLVNTTDMMIFDLVHSYSRFPDAFVTFSSFRSRFPEVSGYCYCADSQGRELAETGLELLLDEIYDTIFAGLDLASTFAETTLYRILQRRFLAVQLVISGRFRCPTKCEVERFAATSFRHPYVPSCHPDGEYQAAQCQQGGPCWCVDSRGQEIPGTRQRGEPPSCAEDQSCPSERRRAFSRLRFGPSGYFSRRSLLLAPEEGPVSQRFARFTASCPPSIKELFLDSGIFQPMLQGRDTRFVAPESLKEAIRGLFPSRELARLALQFTTNAKRLQQNLFGGRFLVKVGQFNLSGALGTRGTFNFSHFFQQLGLPGFQDGRALADLAKPLSVGLNSNPASEAPKASKIDVALRKPVVGSFGFEVNLQENQNALQFLSSFLELPEFLLFLQHAISVPEDIARDLGDVMEMVFSSQGCGQAPGSLFVPACTAEGSYEEVQCFAGDCWCVDAQGRELAGSRVRGGRPRCPTECEKQRARMQSLLGSQPAGSSLFVPACTSKGNFLPVQCFNSECYCVDTEGQPIPGTRSALGEPKKCPSPCQLQAERAFLGTVRTLVSNPSTLPALSSIYIPQCSASGQWSPVQCDGPPEQAFEWYERWEAQNSAGQALTPAELLMKIMSYREAASRNFRLFIQNLYEAGQQGIFPGLARYSSFQDVPVSVLEGNQTQPGGNVFLEPYLFWQILNGQLDRYPGPYSDFSAPLAHFDLRSCWCVDEAGQKLEGTRNEPNKVPACPGSCEEVKLRVLQFIREAEEIVTYSNSSRFPLGESFLAAKGIRLTDEELAFPPLSPSRETFLEKFLSGSDYAIRLAAQSTFDFYQRRLVTLAESPRAPSPVWSSAYLPQCDAFGGWEPVQCHAATGHCWCVDGKGEYVPTSLTARSRQIPQCPTSCERLRASGLLSSWKQAGVQAEPSPKDLFIPTCLETGEFARLQASEAGTWCVDPASGEGVPPGTNSSAQCPSLCEVLQSGVPSRRTSPGYSPACRAEDGGFSPVQCDPAQGSCWCVLGSGEEVPGTRVAGSQPACESPQCPLPFSVADVAGGAILCERASGLGAAAGQRCQLRCSQGYRSAFPPEPLLCSVQRRRWESRPPQPRACQRPQFWQTLQTQAQFQLLLPLGKVCSADYSGLLLAFQVFLLDELTARGFCQIQVKTAGTPVSIPVCDDSSVKVECLSRERLGVNITWKLQLVDAPPASLPDLQDVEEALAGKYLAGRFADLIQSGTFQLHLDSKTFSADTSIRFLQGDRFGTSPRTQFGCLEGFGRVVAASDASQDALGCVKCPEGSYFQDEQCIPCPAGFYQEQAGSLACVPCPEGRTTVYAGAFSQTHCVTDCQKNEVGLQCDQDSQYRASQRDRTSGKAFCVDGEGRRLPWTEAEAPLVDAQCLVMRKFEKLPESKVIFSADVAVMVRSEVPGSESSLMQCLADCALDEACGFLTVSTAGSEVSCDFYAWASDSIACTTSGRSEDALGTSQATSFGSLQCQVKVRSREGDPLAVYLKKGQEFTITGQKRFEQTGFQSALSGMYSPVTFSASGASLAEVHLFCLLACDHDSCCDGFILVQVQGGPLLCGLLSSPDVLLCHVRDWRDPAEAQANASCPGVTYDQDSRQVTLRLGGQEIRGLTPLEGTQDTLTSFQQVYLWKDSDMGSRSESMGCRRDTEPRPASPSETDLTTGLFSPVDLIQVIVDGNVSLPSQQHWLFKHLFSLQQANLWCLSRCAGEPSFCQLAEVTDSEPLYFTCTLYPEAQVCDDILESSPKGCRLILPRRPSALYRKKVVLQDRVKNFYNRLPFQKLTGISIRNKVPMSDKSISSGFFECERLCDMDPCCTGFGFLNVSQLKGGEVTCLTLNSLGLQTCSEEYGGVWRILDCGSPDTEVRTYPFGWYQKPVSPSDAPSFCPSVALPALTENVALDSWQSLALSSVIVDPSIRNFDVAHISTAAVGNFSAARDRCLWECSRHQDCLVTTLQTQPGAVRCMFYADTQSCTHSLQAQNCRLLLHEEATYIYRKPNIPLPGFGTSSPSVPIATHGQLLGRSQAIQVGTSWKPVDQFLGVPYAAPPLGEKRFRAPEHLNWTGSWEATKPRARCWQPGIRTPTPPGVSEDCLYLNVFVPQNMAPNASVLVFFHNAAEGKGSGDRPAVDGSFLAAVGNLIVVTASYRTGIFGFLSSGSSELSGNWGLLDQVVALTWVQTHIQAFGGDPRRVTLAADRGGADIASIHLVTTRAANSRLFRRAVLMGGSALSPAAVIRPERARQQAAALAKEVGCPSSSVQEMVSCLRQEPARILNDAQTKLLAVSGPFHYWGPVVDGQYLRETPARVLQRAPRVKVDLLIGSSQDDGLINRAKAVKQFEESQGRTSSKTAFYQALQNSLGGEAADAGVQAAATWYYSLEHDSDDYASFSRALEQATRDYFIICPVIDMASHWARTVRGNVFMYHAPESYSHSSLELLTDVLYAFGLPFYPAYEGQFTLEEKSLSLKIMQYFSNFIRSGNPNYPHEFSRRAPEFAAPWPDFVPRDGAESYKELSVLLPNRQGLKKADCSFWSKYIQSLKASADETKDGPSADSEEEDQPAGSGLTEDLLGLPELASKTYSK.

The N-terminal stretch at 1-19 (MALALWVFGLLDLICLASA) is a signal peptide. Position 24 is an iodotyrosine; alternate (Y24). Residue Y24 is modified to Sulfotyrosine; alternate. Y24 is subject to Thyroxine; alternate. Residue Y24 is modified to Triiodothyronine; alternate. Thyroglobulin type-1 domains are found at residues 31-92 (LRPC…PAAC), 93-160 (LSFC…PARC), 161-297 (PRSC…RFRC), and 298-358 (PTKC…PPSC). 8 disulfide bridges follow: C34–C52, C63–C70, C72–C92, C96–C120, C131–C138, C140–C160, C164–C183, and C194–C235. At Y108 the chain carries Iodotyrosine. The N-linked (GlcNAc...) (complex) asparagine; alternate glycan is linked to N110. N110 carries N-linked (GlcNAc...) (hybrid) asparagine; alternate glycosylation. Iodotyrosine; alternate is present on Y149. Y149 carries the post-translational modification Diiodotyrosine; alternate. Iodotyrosine is present on residues Y234 and Y258. Intrachain disulfides connect C301/C319, C330/C336, C338/C358, C364/C619, C408/C607, C630/C635, C637/C657, C661/C686, and C697/C702. N483 and N495 each carry an N-linked (GlcNAc...) (complex) asparagine; alternate glycan. N-linked (GlcNAc...) (hybrid) asparagine; alternate glycans are attached at residues N483 and N495. Thyroglobulin type-1 domains follow at residues 604 to 657 (SQGC…RPRC), 658 to 725 (PTEC…PKKC), 726 to 921 (PSPC…VPAC), 922 to 1073 (PGSC…IPQC), 1074 to 1145 (PTSC…SAQC), and 1146 to 1210 (PSLC…QPAC). Y703 bears the Iodotyrosine; alternate mark. Thyroxine; alternate is present on Y703. The residue at position 703 (Y703) is a Triiodothyronine; alternate. Position 703 is a diiodotyrosine; alternate (Y703). Cystine bridges form between C704–C725, C729–C762, C773–C898, C900–C921, C925–C1031, C1042–C1049, C1051–C1073, C1077–C1108, C1126–C1145, C1149–C1169, C1181–C1188, C1190–C1210, C1215–C1264, C1231–C1245, C1306–C1356, and C1331–C1347. Iodotyrosine is present on Y784. N-linked (GlcNAc...) (complex) asparagine; alternate glycosylation occurs at N853. The N-linked (GlcNAc...) (hybrid) asparagine; alternate glycan is linked to N853. Y866 bears the Iodotyrosine; alternate mark. Diiodotyrosine; alternate is present on Y866. Position 883 is a diiodotyrosine (Y883). N-linked (GlcNAc...) (complex) asparagine; alternate glycosylation occurs at N947. The N-linked (GlcNAc...) (hybrid) asparagine; alternate glycan is linked to N947. At Y992 the chain carries Iodotyrosine; alternate. A Diiodotyrosine; alternate modification is found at Y992. N1140 carries N-linked (GlcNAc...) (complex) asparagine; alternate glycosylation. A glycan (N-linked (GlcNAc...) (hybrid) asparagine; alternate) is linked at N1140. Y1310 is modified (iodotyrosine). Y1310 is modified (thyroxine). N1365 is a glycosylation site (N-linked (GlcNAc...) (high mannose) asparagine). Disulfide bonds link C1441/C1461, C1464/C1475, C1478/C1492, C1495/C1512, C1516/C1525, C1545/C1567, C1605/C1629, C1609/C1615, C1641/C1664, C1726/C1751, C1730/C1736, C1735/C1836, and C1762/C1779. Type II repeat units follow at residues 1458 to 1471 (ALGC…SYFQ), 1472 to 1488 (DEQC…EQAG), and 1489 to 1505 (SLAC…VYAG). An Iodotyrosine; alternate modification is found at Y1469. Y1469 carries the post-translational modification Diiodotyrosine; alternate. Residues 1513 to 1567 (VTDCQKNEVGLQCDQDSQYRASQRDRTSGKAFCVDGEGRRLPWTEAEAPLVDAQC) enclose the Thyroglobulin type-1 11 domain. A Type IIIA repeat occupies 1605–1725 (CLADCALDEA…GASLAEVHLF (121 aa)). One copy of the Type IIIB repeat lies at 1726–1893 (CLLACDHDSC…LFSLQQANLW (168 aa)). A glycan (N-linked (GlcNAc...) (complex) asparagine; alternate) is linked at N1776. N-linked (GlcNAc...) (hybrid) asparagine; alternate glycosylation occurs at N1776. Residues 1827–1842 (MGSRSESMGCRRDTEP) are compositionally biased toward basic and acidic residues. Residues 1827 to 1851 (MGSRSESMGCRRDTEPRPASPSETD) form a disordered region. N1870 is a glycosylation site (N-linked (GlcNAc...) (complex) asparagine; alternate). N1870 carries N-linked (GlcNAc...) (hybrid) asparagine; alternate glycosylation. 7 cysteine pairs are disulfide-bonded: C1894–C1920, C1898–C1905, C1929–C1940, C1997–C2025, C2001–C2007, C2006–C2077, and C2036–C2049. The stretch at 1894 to 1996 (CLSRCAGEPS…DKSISSGFFE (103 aa)) is one Type IIIA repeat. The stretch at 1997–2130 (CERLCDMDPC…VGNFSAARDR (134 aa)) is one Type IIIB repeat. The N-linked (GlcNAc...) (high mannose) asparagine glycan is linked to N2014. N-linked (GlcNAc...) (high mannose) asparagine glycosylation occurs at N2123. Cystine bridges form between C2131/C2155, C2135/C2141, and C2164/C2173. The stretch at 2131 to 2188 (CLWECSRHQDCLVTTLQTQPGAVRCMFYADTQSCTHSLQAQNCRLLLHEEATYIYRKP) is one Type IIIA repeat. Y2185 carries the iodotyrosine modification. Positions 2189–2769 (NIPLPGFGTS…PELASKTYSK (581 aa)) are cholinesterase-like (ChEL). N2251 carries N-linked (GlcNAc...) (complex) asparagine; alternate glycosylation. N-linked (GlcNAc...) (hybrid) asparagine; alternate glycosylation is present at N2251. N-linked (GlcNAc...) (high mannose) asparagine glycosylation is present at N2296. Cysteines 2443 and 2454 form a disulfide. Y2541 carries the post-translational modification Thyroxine. Y2574 carries the post-translational modification Iodotyrosine; alternate. Y2574 is subject to Thyroxine; alternate. Y2574 carries the triiodothyronine; alternate modification. At Y2574 the chain carries Diiodotyrosine; alternate. An iodotyrosine mark is found at Y2588 and Y2618. Residues C2592 and C2716 are joined by a disulfide bond. Y2698 carries the post-translational modification Diiodotyrosine. A disordered region spans residues 2730-2769 (ADETKDGPSADSEEEDQPAGSGLTEDLLGLPELASKTYSK). Position 2767 is an iodotyrosine; alternate (Y2767). Residue Y2767 is modified to Thyroxine; alternate. At Y2767 the chain carries Triiodothyronine; alternate. Y2767 carries the post-translational modification Diiodotyrosine; alternate.

The protein belongs to the type-B carboxylesterase/lipase family. In terms of assembly, monomer. Homodimer (via ChEL region); occurs in the endoplasmic reticulum and is required for export to the Golgi apparatus. Homooligomer; disulfide-linked; stored in this form in the thyroid follicle lumen. Iodinated on tyrosine residues by TPO. There are 4 pairs of iodinated tyrosines used for coupling: acceptor Tyr-24 is coupled to donor Tyr-149 or Tyr-234, acceptor Tyr-2574 is coupled to donor Tyr-2541, acceptor Tyr-2767 in monomer 1 is coupled to donor Tyr-2767 in monomer 2 and acceptor Tyr-1310 in monomer 1 is coupled to donor Tyr-108 in monomer 2. In terms of processing, sulfated tyrosines are desulfated during iodination. Post-translationally, undergoes sequential proteolysis by cathepsins to release thyroxine (T4) and triiodothyronine (T3) hormones. In the thyroid follicle lumen, cross-linked TG (storage form) is solubilized by limited proteolysis mediated by cathepsins CTSB and/or CTSL. Partially cleaved TG is further processed by CTSK/cathepsin K and/or CTSL resulting in the release of T4. Following endocytosis, further processing occurs leading to the release of T3 and more T4 hormones. In terms of tissue distribution, specifically expressed in the thyroid gland.

It localises to the secreted. Functionally, acts as a substrate for the production of iodinated thyroid hormones thyroxine (T4) and triiodothyronine (T3). The synthesis of T3 and T4 involves iodination of selected tyrosine residues of TG/thyroglobulin followed by their oxidative coupling. Following TG re-internalization and lysosomal-mediated proteolysis, T3 and T4 are released from the polypeptide backbone leading to their secretion into the bloodstream. One dimer produces 7 thyroid hormone molecules. This chain is Thyroglobulin (TG), found in Bos taurus (Bovine).